The chain runs to 270 residues: NAD(P)H-hydrate epimerase (270 aa).

Positions F25–Q234 constitute a YjeF N-terminal domain. (6S)-NADPHX is bound at residue D73–Q77. K(+) is bound by residues N74 and D144. Residues G148–H154 and E177 each bind (6S)-NADPHX. Residue T180 participates in K(+) binding.

This sequence belongs to the NnrE/AIBP family. Requires K(+) as cofactor.

The enzyme catalyses (6R)-NADHX = (6S)-NADHX. It carries out the reaction (6R)-NADPHX = (6S)-NADPHX. Functionally, catalyzes the epimerization of the S- and R-forms of NAD(P)HX, a damaged form of NAD(P)H that is a result of enzymatic or heat-dependent hydration. This is a prerequisite for the S-specific NAD(P)H-hydrate dehydratase to allow the repair of both epimers of NAD(P)HX. The chain is NAD(P)H-hydrate epimerase from Legionella pneumophila (strain Corby).